A 243-amino-acid polypeptide reads, in one-letter code: Carboxy-S-adenosyl-L-methionine synthase (243 aa).

S-adenosyl-L-methionine contacts are provided by residues Tyr-40, 65 to 67 (GCS), 90 to 91 (DN), 118 to 119 (DI), Asn-133, and Arg-200.

This sequence belongs to the class I-like SAM-binding methyltransferase superfamily. Cx-SAM synthase family. As to quaternary structure, homodimer.

It catalyses the reaction prephenate + S-adenosyl-L-methionine = carboxy-S-adenosyl-L-methionine + 3-phenylpyruvate + H2O. In terms of biological role, catalyzes the conversion of S-adenosyl-L-methionine (SAM) to carboxy-S-adenosyl-L-methionine (Cx-SAM). In Shewanella pealeana (strain ATCC 700345 / ANG-SQ1), this protein is Carboxy-S-adenosyl-L-methionine synthase.